The primary structure comprises 522 residues: MAFLDNPTIILAHIRQSHVTSDDTGMCEMVLIDHDVDLEKTHPPSVPGDSGSEVQGSSGETQGYIYAQSVDITSSWDFGIRRRSNTAQRLERLRKERQNQIKCKNIQWKERNSKQSAQELKSLFEKKSLKEKPPSSGKQSILSVRLEQCPLQLNNPFNEYSKFDGKGHVGTTATKKIDVYLPLHSSQDRLLPMTVVTMASARVQDLIGLICWQYTSEGREPKLNDNVSAYCLHIAEDDGEVDTDFPPLDSNEPIHKFGFSTLALVEKYSSPGLTSKESLFVRINAAHGFSLIQVDNTKVTMKEILLKALKRRKGSQKISGPQYRLEKQSEPNIGVDLESTLESQNAWEFCLVRENSSRADGVFEEDSQIDIATVQDMLSSHHYKSFKVSMIHRLRFTTDVQLGISGDKVEIDPVTNQKASTKFWIKQKPISIDCDLLCACDLAEEKSPSHAVFKLTYLSSHDYKHLYFESDAATVSEIVLKVNYILESRASTARADYFAQKQRKLNRRTSFSFQKEKKSGQQ.

An N-acetylalanine modification is found at A2. The tract at residues 2–184 is interaction with MAP3K2; the sequence is AFLDNPTIIL…KKIDVYLPLH (183 aa). Residues 2 to 267 are interaction with NBN; that stretch reads AFLDNPTIIL…GFSTLALVEK (266 aa). Residues 38–59 are disordered; it reads LEKTHPPSVPGDSGSEVQGSSG. T86 carries the post-translational modification Phosphothreonine. Residues S128, S186, S315, and S356 each carry the phosphoserine modification. The CRIM domain occupies 139 to 267; it reads QSILSVRLEQ…GFSTLALVEK (129 aa). The SIN1-type RBD stretch occupies residues 279–353; the sequence is LFVRINAAHG…QNAWEFCLVR (75 aa). One can recognise an SIN1-type PH domain in the interval 382-487; the sequence is HYKSFKVSMI…IVLKVNYILE (106 aa). R393 contributes to the a 1,2-diacyl-sn-glycero-3-phospho-(1D-myo-inositol-3,4,5-trisphosphate) binding site. The residue at position 398 (T398) is a Phosphothreonine. A 1,2-diacyl-sn-glycero-3-phospho-(1D-myo-inositol-3,4,5-trisphosphate) contacts are provided by K428 and K464. Residues 468–522 form an interaction with ATF2 region; sequence FESDAATVSEIVLKVNYILESRASTARADYFAQKQRKLNRRTSFSFQKEKKSGQQ. The residue at position 510 (S510) is a Phosphoserine.

Belongs to the SIN1 family. As to quaternary structure, component of the mechanistic target of rapamycin complex 2 (mTORC2), consisting in two heterotretramers composed of MTOR, MLST8, RICTOR and MAPKAP1/SIN1. The mTORC2 core complex associates with PRR5/PROTOR1 and/or PRR5L/PROTOR2. Contrary to mTORC1, mTORC2 does not bind to and is not sensitive to FKBP12-rapamycin. Interacts with MAP3K2. Interacts with ATF2. Interacts with MAPK8. Interacts with GTP-bound HRAS and KRAS; inhibiting their activity. Interacts with IFNAR2. In terms of processing, phosphorylation at Ser-128 by PKC promotes relocalization to the perinuclear region, where the mTORC2 complex specifically mediates phosphorylation of SGK1. Phosphorylated at Thr-86 by AKT1 or RPS6KB1 in the presence of growth factors; the effect of this phosphorylation is however unclear. According to two studies, phosphorylation at Thr-86 by AKT1 is part of a positive feedback loop that increases mTORC2 activation. According to another study, phosphorylation at Thr-86 and Thr-398 by RPS6KB1 promotes dissociation from the mTORC2 complex, leading to inhibit mTORC2 signaling.

The protein localises to the cell membrane. It is found in the endoplasmic reticulum membrane. The protein resides in the early endosome membrane. It localises to the late endosome membrane. Its subcellular location is the lysosome membrane. The protein localises to the golgi apparatus membrane. It is found in the mitochondrion outer membrane. The protein resides in the cytoplasm. It localises to the perinuclear region. Its subcellular location is the nucleus. Its activity is regulated as follows. Phosphatidylinositol 3,4,5-trisphosphate (PI(3,4,5)P3) promotes MTOR activation by relieving MAPKAP1/SIN1-mediated inhibition of MTOR that takes place in absence of PI(3,4,5)P3. In terms of biological role, component of the mechanistic target of rapamycin complex 2 (mTORC2), which transduces signals from growth factors to pathways involved in proliferation, cytoskeletal organization, lipogenesis and anabolic output. In response to growth factors, mTORC2 phosphorylates and activates AGC protein kinase family members, including AKT (AKT1, AKT2 and AKT3), PKC (PRKCA, PRKCB and PRKCE) and SGK1. In contrast to mTORC1, mTORC2 is nutrient-insensitive. Within the mTORC2 complex, MAPKAP1/SIN1 acts as a substrate adapter which recognizes and binds AGC protein kinase family members for phosphorylation by MTOR. mTORC2 plays a critical role in AKT1 activation by mediating phosphorylation of different sites depending on the context, such as 'Thr-450', 'Ser-473', 'Ser-477' or 'Thr-479', facilitating the phosphorylation of the activation loop of AKT1 on 'Thr-308' by PDPK1/PDK1 which is a prerequisite for full activation. mTORC2 catalyzes the phosphorylation of SGK1 at 'Ser-422' and of PRKCA on 'Ser-657'. The mTORC2 complex also phosphorylates various proteins involved in insulin signaling, such as FBXW8 and IGF2BP1. mTORC2 acts upstream of Rho GTPases to regulate the actin cytoskeleton, probably by activating one or more Rho-type guanine nucleotide exchange factors. mTORC2 promotes the serum-induced formation of stress-fibers or F-actin. MAPKAP1 inhibits MAP3K2 by preventing its dimerization and autophosphorylation. Inhibits HRAS and KRAS independently of mTORC2 complex. Enhances osmotic stress-induced phosphorylation of ATF2 and ATF2-mediated transcription. Involved in ciliogenesis, regulates cilia length through its interaction with CCDC28B independently of mTORC2 complex. In Rattus norvegicus (Rat), this protein is Target of rapamycin complex 2 subunit MAPKAP1.